A 345-amino-acid polypeptide reads, in one-letter code: Ribosome production factor 1 (345 aa).

Disordered stretches follow at residues 1-57 (MAKA…ISEI) and 70-105 (WKQQQRKEKLAAKKKLKREREALGDKAPPKPVPKTI). Basic and acidic residues predominate over residues 87–97 (REREALGDKAP). The region spanning 142 to 325 (PKILITTSDR…LRSLQKGTFD (184 aa)) is the Brix domain. The RNA-binding stretch occupies residues 303-320 (VGIQELGPRFTLKLRSLQ).

The protein localises to the nucleus. Its subcellular location is the nucleolus. May be required for ribosome biogenesis. The sequence is that of Ribosome production factor 1 (Rpf1) from Rattus norvegicus (Rat).